We begin with the raw amino-acid sequence, 433 residues long: Serine hydroxymethyltransferase (433 aa).

Residues Leu-132 and 136 to 138 each bind (6S)-5,6,7,8-tetrahydrofolate; that span reads GHL. At Lys-241 the chain carries N6-(pyridoxal phosphate)lysine.

Belongs to the SHMT family. Homodimer. It depends on pyridoxal 5'-phosphate as a cofactor.

The protein resides in the cytoplasm. It carries out the reaction (6R)-5,10-methylene-5,6,7,8-tetrahydrofolate + glycine + H2O = (6S)-5,6,7,8-tetrahydrofolate + L-serine. The protein operates within one-carbon metabolism; tetrahydrofolate interconversion. It participates in amino-acid biosynthesis; glycine biosynthesis; glycine from L-serine: step 1/1. Functionally, catalyzes the reversible interconversion of serine and glycine with tetrahydrofolate (THF) serving as the one-carbon carrier. This reaction serves as the major source of one-carbon groups required for the biosynthesis of purines, thymidylate, methionine, and other important biomolecules. Also exhibits THF-independent aldolase activity toward beta-hydroxyamino acids, producing glycine and aldehydes, via a retro-aldol mechanism. The protein is Serine hydroxymethyltransferase of Afipia carboxidovorans (strain ATCC 49405 / DSM 1227 / KCTC 32145 / OM5) (Oligotropha carboxidovorans).